Consider the following 253-residue polypeptide: 23S rRNA (cytidine-2'-O)-methyltransferase TlyA (253 aa).

Residues 1–73 (MRFDFFVSKR…LKLDLLSEIY (73 aa)) enclose the S4 RNA-binding domain.

This sequence belongs to the TlyA family.

The enzyme catalyses cytidine(1920) in 23S rRNA + S-adenosyl-L-methionine = 2'-O-methylcytidine(1920) in 23S rRNA + S-adenosyl-L-homocysteine + H(+). In terms of biological role, catalyzes the 2'-O-methylation at nucleotide C1920 in 23S rRNA. Enhances motility. Enhances biofilm formation. Involved in the assembly of 70S ribosomes. Involved in virulence by promoting adherence and invasion to host cells. Involved in pathogenicity by modulating secretion of host-protective chemokine interleukin 8 (IL-8). Involved in susceptibility to antibiotic capreomycin. This is 23S rRNA (cytidine-2'-O)-methyltransferase TlyA from Campylobacter jejuni subsp. jejuni serotype O:23/36 (strain 81-176).